Here is a 462-residue protein sequence, read N- to C-terminus: Nuclear factor interleukin-3-regulated protein (462 aa).

Residue K24 forms a Glycyl lysine isopeptide (Lys-Gly) (interchain with G-Cter in SUMO2) linkage. The 64-residue stretch at 73 to 136 folds into the bZIP domain; sequence DAMYWEKRRK…GLISSTAYAQ (64 aa). The segment at 79-95 is basic motif; sequence KRRKNNEAAKRSREKRR. The segment at 99 to 106 is leucine-zipper; that stretch reads LVLENKLI. Disordered regions lie at residues 189–237 and 258–302; these read DVSE…DDRG and SPPL…IHSP. Residues 201–210 are compositionally biased toward polar residues; it reads ESSVQGSCRS. Residue K214 forms a Glycyl lysine isopeptide (Lys-Gly) (interchain with G-Cter in SUMO2) linkage. Residue K219 forms a Glycyl lysine isopeptide (Lys-Gly) (interchain with G-Cter in SUMO1); alternate linkage. K219 is covalently cross-linked (Glycyl lysine isopeptide (Lys-Gly) (interchain with G-Cter in SUMO2); alternate). Over residues 227–237 the composition is skewed to basic and acidic residues; that stretch reads SYTREPRDDRG. Residues 264 to 274 are compositionally biased toward polar residues; sequence VNRSSSNSPRT. The tract at residues 299 to 363 is necessary for transcriptional repression and sufficient for interaction with DR1; it reads IHSPVELKHV…PIDMTSKRHF (65 aa). S301 carries the phosphoserine modification. Glycyl lysine isopeptide (Lys-Gly) (interchain with G-Cter in SUMO2) cross-links involve residues K306, K314, K326, K332, K337, and K350. The residue at position 353 (S353) is a Phosphoserine. Glycyl lysine isopeptide (Lys-Gly) (interchain with G-Cter in SUMO2) cross-links involve residues K360, K394, K401, K406, K412, K419, K424, K434, and K448.

Belongs to the bZIP family. NFIL3 subfamily. In terms of assembly, homodimer. Binds DNA as a dimer. Interacts with DR1. Interacts with PER2 and CRY2. Interacts with NR0B2. Interacts with MYSM1. As to expression, expressed in bladder stomach, thyroid, spinal cord, lymph node, trachea, adrenal gland, bone marrow and muscle.

The protein resides in the nucleus. Functionally, acts as a transcriptional regulator that recognizes and binds to the sequence 5'-[GA]TTA[CT]GTAA[CT]-3', a sequence present in many cellular and viral promoters. Represses transcription from promoters with activating transcription factor (ATF) sites. Represses promoter activity in osteoblasts. Represses transcriptional activity of PER1. Represses transcriptional activity of PER2 via the B-site on the promoter. Activates transcription from the interleukin-3 promoter in T-cells. Competes for the same consensus-binding site with PAR DNA-binding factors (DBP, HLF and TEF). Component of the circadian clock that acts as a negative regulator for the circadian expression of PER2 oscillation in the cell-autonomous core clock. Protects pro-B cells from programmed cell death. Represses the transcription of CYP2A5. Positively regulates the expression and activity of CES2 by antagonizing the repressive action of NR1D1 on CES2. Required for the development of natural killer cell precursors. This chain is Nuclear factor interleukin-3-regulated protein (NFIL3), found in Homo sapiens (Human).